We begin with the raw amino-acid sequence, 718 residues long: DNA ligase (718 aa).

NAD(+)-binding positions include 44 to 48 (DADYD), 93 to 94 (SL), and Glu-127. Catalysis depends on Lys-129, which acts as the N6-AMP-lysine intermediate. Positions 150, 186, 302, and 326 each coordinate NAD(+). Positions 432, 435, 456, and 462 each coordinate Zn(2+). Residues 640–718 (TAGSPVAGKT…EDQWLALISG (79 aa)) form the BRCT domain.

This sequence belongs to the NAD-dependent DNA ligase family. LigA subfamily. The cofactor is Mg(2+). Mn(2+) serves as cofactor.

It carries out the reaction NAD(+) + (deoxyribonucleotide)n-3'-hydroxyl + 5'-phospho-(deoxyribonucleotide)m = (deoxyribonucleotide)n+m + AMP + beta-nicotinamide D-nucleotide.. Its function is as follows. DNA ligase that catalyzes the formation of phosphodiester linkages between 5'-phosphoryl and 3'-hydroxyl groups in double-stranded DNA using NAD as a coenzyme and as the energy source for the reaction. It is essential for DNA replication and repair of damaged DNA. This is DNA ligase from Rhizobium johnstonii (strain DSM 114642 / LMG 32736 / 3841) (Rhizobium leguminosarum bv. viciae).